The following is a 353-amino-acid chain: Transcription factor MafA (353 aa).

At serine 14 the chain carries Phosphoserine. Residue lysine 32 forms a Glycyl lysine isopeptide (Lys-Gly) (interchain with G-Cter in SUMO2) linkage. Disordered regions lie at residues 40–108 and 177–219; these read RFCH…GGTS and ADDM…GAGH. The span at 46 to 73 shows a compositional bias: low complexity; sequence PPGSLSSTPLSTPCSSVPSSPSFCAPSP. Serine 49 bears the Phosphoserine mark. 2 positions are modified to phosphothreonine: threonine 53 and threonine 57. Serine 61 and serine 65 each carry phosphoserine. Gly residues predominate over residues 74–93; sequence GTGGGGGAGGGGGSSQAGGA. A compositionally biased stretch (basic residues) spans 183–210; it reads GHHHGAHHAAHHHHAAHHHHHHHHHHGG. The segment at 254–279 is basic motif; that stretch reads RLKQKRRTLKNRGYAQSCRFKRVQQR. The bZIP domain occupies 254–317; that stretch reads RLKQKRRTLK…DLYKEKYEKL (64 aa). Positions 282 to 303 are leucine-zipper; that stretch reads LESEKCQLQSQVEQLKLEVGRL. The tract at residues 315–353 is disordered; the sequence is EKLAGRGGPGSAGGAGFPREPSPPQAGPGGAKGTADFFL. Residues 319 to 330 show a composition bias toward gly residues; the sequence is GRGGPGSAGGAG.

The protein belongs to the bZIP family. Maf subfamily. As to quaternary structure, forms homodimers or heterodimers. Monomers and dimers are able to bind DNA, but the off-rate is faster for monomers. Interacts with NEUROD1 and PDX1. May interact with MAFB, FOS, JUN and PCAF. Ubiquitinated, leading to its degradation by the proteasome. Post-translationally, phosphorylated at tyrosines. In terms of tissue distribution, expressed in the islets of Langerhans (at protein level).

It localises to the nucleus. Its function is as follows. Transcription factor that activates insulin gene expression. Acts synergistically with NEUROD1/BETA2 and PDX1. Binds the insulin enhancer C1/RIPE3b element. Binds to consensus TRE-type MARE 5'-TGCTGACTCAGCA-3' DNA sequence. The sequence is that of Transcription factor MafA (MAFA) from Homo sapiens (Human).